A 272-amino-acid polypeptide reads, in one-letter code: Regulatory protein RecX (272 aa).

It belongs to the RecX family.

It localises to the cytoplasm. Modulates RecA activity. This Staphylococcus saprophyticus subsp. saprophyticus (strain ATCC 15305 / DSM 20229 / NCIMB 8711 / NCTC 7292 / S-41) protein is Regulatory protein RecX.